The chain runs to 177 residues: uncharacterized protein (177 aa).

2 stretches are compositionally biased toward low complexity: residues 78-93 and 120-130; these read NNNNNNNNTINNNTNN and SDVNSNNNNGN. The tract at residues 78–146 is disordered; sequence NNNNNNNNTI…NKKLKKDGTN (69 aa). Residues 131–146 are compositionally biased toward basic residues; that stretch reads HQKKKINKKLKKDGTN.

This is an uncharacterized protein from Dictyostelium discoideum (Social amoeba).